A 66-amino-acid chain; its full sequence is Large ribosomal subunit protein bL35 (66 aa).

Belongs to the bacterial ribosomal protein bL35 family.

The protein is Large ribosomal subunit protein bL35 of Thermomicrobium roseum (strain ATCC 27502 / DSM 5159 / P-2).